Here is a 100-residue protein sequence, read N- to C-terminus: Urease subunit gamma (100 aa).

The protein belongs to the urease gamma subunit family. In terms of assembly, heterotrimer of UreA (gamma), UreB (beta) and UreC (alpha) subunits. Three heterotrimers associate to form the active enzyme.

It is found in the cytoplasm. It carries out the reaction urea + 2 H2O + H(+) = hydrogencarbonate + 2 NH4(+). The protein operates within nitrogen metabolism; urea degradation; CO(2) and NH(3) from urea (urease route): step 1/1. In Cupriavidus pinatubonensis (strain JMP 134 / LMG 1197) (Cupriavidus necator (strain JMP 134)), this protein is Urease subunit gamma.